We begin with the raw amino-acid sequence, 388 residues long: UDP-galactose transporter senju (388 aa).

Transmembrane regions (helical) follow at residues 13-33 (LTFV…IFVT), 46-66 (TVTV…CLYC), 84-104 (VLGL…LAFV), 113-133 (TYYL…QIIF), 142-162 (WISL…FGSF), 202-222 (FSLS…AGVY), 236-256 (IFVQ…VILL), 276-296 (FSVL…SFFL), 309-329 (ALEL…PIYM), and 331-351 (TALA…SPVV).

This sequence belongs to the nucleotide-sugar transporter family.

It is found in the golgi apparatus membrane. In terms of biological role, UDP-galactose transporter involved in the synthesis of galactose-containing glycans. Plays a role in quiescence of the innate immune response, possibly by regulating glycosylation of the Toll pathway ligand spz. The protein is UDP-galactose transporter senju of Drosophila melanogaster (Fruit fly).